The following is a 485-amino-acid chain: MALLVEKTTSGREYKVKDLSQADFGRLEIELAEVEMPGLMACRAEFGPSQPFKGARISGSLHMTIQTAVLIETLTALGAEVRWCSCNIFSTQDHAAAAIARDSAAVFAWKGETLQEYWWCTERCLEWGAGGGPDLIVDDGGDATLLIHEGVKAEEEYEKNGKIPDPASTDNAEFQIVLGLIRDSLSVDPKKYRRMKERLVGVSEETTTGVKRLYQMQYSGTLLFPAINVNDSVTKSKFDNLYGCRHSLPDGLMRATDVMIAGKVAVVCGYGDVGLGCAAALKTAGARVIVTEIDPICALQALMEGLPVLRLEDVVSEADIFVTTTGNKDIIMVDHMRKMKNNAIVCNIGHFDNEIDMLGLESFPGVKRITIKPQTDRRVFPDTNSGILVLAEGRLMNLGCATGHPSFVMSSSFTNQVIAQLELWKERASGKYEKKVYVLPKHLDEKVAALHLGKLGAKLTKLTPSQADYISVPVEGPYKPAHYRY.

Positions 64, 139, and 205 each coordinate substrate. 206 to 208 (TTT) lines the NAD(+) pocket. 2 residues coordinate substrate: lysine 235 and aspartate 239. NAD(+) is bound by residues asparagine 240, 269-274 (GYGDVG), glutamate 292, asparagine 327, 348-350 (IGH), and asparagine 397.

Belongs to the adenosylhomocysteinase family. NAD(+) serves as cofactor.

The catalysed reaction is S-adenosyl-L-homocysteine + H2O = L-homocysteine + adenosine. It functions in the pathway amino-acid biosynthesis; L-homocysteine biosynthesis; L-homocysteine from S-adenosyl-L-homocysteine: step 1/1. Its function is as follows. Adenosylhomocysteine is a competitive inhibitor of S-adenosyl-L-methionine-dependent methyl transferase reactions; therefore adenosylhomocysteinase may play a key role in the control of methylations via regulation of the intracellular concentration of adenosylhomocysteine. The chain is Adenosylhomocysteinase (SAHH) from Phalaenopsis sp. (Moth orchid).